Consider the following 512-residue polypeptide: ATP synthase subunit alpha (512 aa).

Residue 169 to 176 (GDRQTGKT) participates in ATP binding.

This sequence belongs to the ATPase alpha/beta chains family. As to quaternary structure, F-type ATPases have 2 components, CF(1) - the catalytic core - and CF(0) - the membrane proton channel. CF(1) has five subunits: alpha(3), beta(3), gamma(1), delta(1), epsilon(1). CF(0) has four main subunits: a(1), b(1), b'(1) and c(9-12).

The protein localises to the cell inner membrane. The catalysed reaction is ATP + H2O + 4 H(+)(in) = ADP + phosphate + 5 H(+)(out). In terms of biological role, produces ATP from ADP in the presence of a proton gradient across the membrane. The alpha chain is a regulatory subunit. The protein is ATP synthase subunit alpha of Jannaschia sp. (strain CCS1).